The primary structure comprises 257 residues: BTB/POZ domain-containing protein KCTD1 (257 aa).

The segment at 1-25 is disordered; that stretch reads MSRPLITRSPASPLNNQGIPTPAQL. S9 and S12 each carry phosphoserine. The segment covering 9–25 has biased composition (polar residues); the sequence is SPASPLNNQGIPTPAQL. The 71-residue stretch at 30–100 folds into the BTB domain; that stretch reads APVHIDVGGH…LRTSKLLIPD (71 aa).

Forms homopentamers. Interacts with KCTD15, probably forming heteropentamers depending on its abundance in a cell-type dependent manner. Interacts with TFAP2A, TFAP2B and TFAP2C via the BTB domain. Sumoylated.

It is found in the nucleus. May repress the transcriptional activity of AP-2 family members, including TFAP2A, TFAP2B and TFAP2C to various extent. This is BTB/POZ domain-containing protein KCTD1 (KCTD1) from Bos taurus (Bovine).